The sequence spans 212 residues: Molybdenum cofactor guanylyltransferase (212 aa).

Residues 14–16, Lys-27, Asn-55, Asp-73, and Asp-108 each bind GTP; that span reads LAG. Mg(2+) is bound at residue Asp-108.

Belongs to the MobA family. Monomer. The cofactor is Mg(2+).

It is found in the cytoplasm. The catalysed reaction is Mo-molybdopterin + GTP + H(+) = Mo-molybdopterin guanine dinucleotide + diphosphate. Transfers a GMP moiety from GTP to Mo-molybdopterin (Mo-MPT) cofactor (Moco or molybdenum cofactor) to form Mo-molybdopterin guanine dinucleotide (Mo-MGD) cofactor. The polypeptide is Molybdenum cofactor guanylyltransferase (Bradyrhizobium sp. (strain ORS 278)).